The primary structure comprises 575 residues: MPQNHRLQFSVEESICFQKGQEVSELLSISLDPDIRVQEVNDYVSIIGSLELTGEYNIDQNKHTEEIYTDKRFVEQVRKREDGSAELTHCFPVDITIPKNKVSHLQDVFVFIDAFDYQLTDSRILTIQADLAIEGLLDDTQDKEPEIPLYEAPAAFREEELSEPPAHSVVEEPGASSAEEAVLQHEPPAEPPELFISKAGLREELETEKAESEPPESVASEPEAREDVKEEEESEELAVPETEVRAESETEESEPEPDPSEIEIQEIVKAKKETAEPAAAIADVREEADSPAETELREHVGAEESPALEAELHSETVIAKEKEETTVSPNHEYALRQEAQNEEAAQSDQADPALCQEEAEPDEALESVSEAALSIEDSRETASAVYMENDNADLHFHFNQKTSSEEASQEELPEPAYRTFLPEQEEEDSFYSAPKLLEEEEQEEESFEIEVRKTPSAEEPKEETPFQSFQLPESSETERKETDAVPRVAPAAETKEPQTKESDNSLYLTKLFTKEADEFSRMKICIVQQEDTIERLCERYEITSQQLIRMNSLALDDELKAGQILYIPQYKNSHA.

Residues 159 to 502 (EELSEPPAHS…ETKEPQTKES (344 aa)) form a disordered region. Positions 200 to 212 (GLREELETEKAES) are enriched in basic and acidic residues. Acidic residues-rich tracts occupy residues 229–238 (KEEEESEELA) and 249–264 (ETEE…EIEI). Composition is skewed to basic and acidic residues over residues 266 to 275 (EIVKAKKETA), 283 to 302 (DVRE…HVGA), and 310 to 325 (AELH…KEET). The span at 438–448 (EEEEQEEESFE) shows a compositional bias: acidic residues. Residues 449–464 (IEVRKTPSAEEPKEET) are compositionally biased toward basic and acidic residues. Polar residues predominate over residues 465–474 (PFQSFQLPES). Over residues 493 to 502 (ETKEPQTKES) the composition is skewed to basic and acidic residues. The 45-residue stretch at 523-567 (KICIVQQEDTIERLCERYEITSQQLIRMNSLALDDELKAGQILYI) folds into the LysM domain.

Its function is as follows. Required for assembly of a normal spore coat. May be a component of the innermost layer of the spore coat that aids in its adherence to the prespore. This chain is Stage VI sporulation protein D (spoVID), found in Bacillus subtilis (strain 168).